The chain runs to 542 residues: Cytochrome P450 79B1 (542 aa).

The helical transmembrane segment at 21 to 41 (FSNMYLLTTLQAFVAITLVML) threads the bilayer. Residue Cys478 participates in heme binding.

Belongs to the cytochrome P450 family. It depends on heme as a cofactor.

It is found in the membrane. Functionally, converts tyrosine to para-hydrophenylacetaldoxime in para-hydroxybenzylglucosinolate biosynthesis. This Sinapis alba (White mustard) protein is Cytochrome P450 79B1 (CYP79B1).